Reading from the N-terminus, the 391-residue chain is Elongation factor Tu 1 (391 aa).

The region spanning Lys10–Glu201 is the tr-type G domain. A G1 region spans residues Gly19–Thr26. Gly19–Thr26 contacts GTP. Residue Thr26 coordinates Mg(2+). Residues Gly55–Ser59 are G2. Positions Asp76–Gly79 are G3. Residues Asp76–His80 and Asn131–Asp134 contribute to the GTP site. The tract at residues Asn131–Asp134 is G4. The interval Ser169–Leu171 is G5.

It belongs to the TRAFAC class translation factor GTPase superfamily. Classic translation factor GTPase family. EF-Tu/EF-1A subfamily. Monomer.

The protein resides in the cytoplasm. It carries out the reaction GTP + H2O = GDP + phosphate + H(+). Functionally, GTP hydrolase that promotes the GTP-dependent binding of aminoacyl-tRNA to the A-site of ribosomes during protein biosynthesis. The protein is Elongation factor Tu 1 of Rhizobium etli (strain ATCC 51251 / DSM 11541 / JCM 21823 / NBRC 15573 / CFN 42).